Consider the following 416-residue polypeptide: Na(+)/H(+) antiporter NhaA (416 aa).

Helical transmembrane passes span 18–38 (VGGA…NSPW), 59–79 (LTLA…VAGL), 97–117 (ALPI…AAVI), 127–147 (GWAI…ALTG), 167–187 (LLAI…LWLL), 265–285 (GICV…ATVF), 297–317 (VMLG…WVAI), 333–353 (MFAL…VAEL), and 363–383 (LAKA…SALL). The segment at 396 to 416 (ALELQPDEGDASDPSEGGSLR) is disordered.

Belongs to the NhaA Na(+)/H(+) (TC 2.A.33) antiporter family.

It localises to the cell membrane. The catalysed reaction is Na(+)(in) + 2 H(+)(out) = Na(+)(out) + 2 H(+)(in). Na(+)/H(+) antiporter that extrudes sodium in exchange for external protons. This is Na(+)/H(+) antiporter NhaA from Nocardia farcinica (strain IFM 10152).